The sequence spans 255 residues: Probable membrane transporter protein HI_0198 (255 aa).

8 helical membrane passes run 7 to 27, 28 to 48, 76 to 96, 99 to 119, 132 to 152, 153 to 173, 191 to 211, and 235 to 255; these read LLAI…IAGG, GGLI…MALG, IWFI…LIQS, VAIF…YFLF, LSYL…DGFF, GPGT…FNLP, FALF…MMAG, and VVIM…WFHF.

The protein belongs to the 4-toluene sulfonate uptake permease (TSUP) (TC 2.A.102) family.

Its subcellular location is the cell membrane. The protein is Probable membrane transporter protein HI_0198 of Haemophilus influenzae (strain ATCC 51907 / DSM 11121 / KW20 / Rd).